Here is a 226-residue protein sequence, read N- to C-terminus: Thaumatin-like protein (226 aa).

The N-terminal stretch at 1–24 (MNFSKNLPLLVSLWAITFFAYTHA) is a signal peptide. Disulfide bonds link Cys33–Cys225, Cys74–Cys84, Cys89–Cys95, Cys140–Cys214, Cys145–Cys197, Cys153–Cys163, Cys167–Cys176, and Cys177–Cys184.

The protein belongs to the thaumatin family. In terms of tissue distribution, expressed in fruits.

It localises to the secreted. In terms of biological role, 3D-structure modeling suggests it may have endo-(1,3)-beta-glucanase activity. The polypeptide is Thaumatin-like protein (Olea europaea (Common olive)).